We begin with the raw amino-acid sequence, 443 residues long: ATP-dependent protease ATPase subunit HslU (443 aa).

ATP is bound by residues Ile-18 and Gly-60 to Glu-65. A disordered region spans residues Pro-137–Arg-156. The span at Gln-145 to Arg-156 shows a compositional bias: polar residues. 3 residues coordinate ATP: Asp-256, Glu-321, and Arg-393.

This sequence belongs to the ClpX chaperone family. HslU subfamily. As to quaternary structure, a double ring-shaped homohexamer of HslV is capped on each side by a ring-shaped HslU homohexamer. The assembly of the HslU/HslV complex is dependent on binding of ATP.

It is found in the cytoplasm. ATPase subunit of a proteasome-like degradation complex; this subunit has chaperone activity. The binding of ATP and its subsequent hydrolysis by HslU are essential for unfolding of protein substrates subsequently hydrolyzed by HslV. HslU recognizes the N-terminal part of its protein substrates and unfolds these before they are guided to HslV for hydrolysis. The protein is ATP-dependent protease ATPase subunit HslU of Vibrio vulnificus (strain YJ016).